The following is a 336-amino-acid chain: Phosphate acyltransferase (336 aa).

The protein belongs to the PlsX family. Homodimer. Probably interacts with PlsY.

Its subcellular location is the cytoplasm. The enzyme catalyses a fatty acyl-[ACP] + phosphate = an acyl phosphate + holo-[ACP]. Its pathway is lipid metabolism; phospholipid metabolism. Functionally, catalyzes the reversible formation of acyl-phosphate (acyl-PO(4)) from acyl-[acyl-carrier-protein] (acyl-ACP). This enzyme utilizes acyl-ACP as fatty acyl donor, but not acyl-CoA. This Ectopseudomonas mendocina (strain ymp) (Pseudomonas mendocina) protein is Phosphate acyltransferase.